We begin with the raw amino-acid sequence, 209 residues long: Molybdenum cofactor guanylyltransferase (209 aa).

GTP-binding positions include 14-16 (LAG), Lys-31, and Asp-104. Residue Asp-104 participates in Mg(2+) binding.

This sequence belongs to the MobA family. Monomer. It depends on Mg(2+) as a cofactor.

The protein localises to the cytoplasm. It catalyses the reaction Mo-molybdopterin + GTP + H(+) = Mo-molybdopterin guanine dinucleotide + diphosphate. Its function is as follows. Transfers a GMP moiety from GTP to Mo-molybdopterin (Mo-MPT) cofactor (Moco or molybdenum cofactor) to form Mo-molybdopterin guanine dinucleotide (Mo-MGD) cofactor. The sequence is that of Molybdenum cofactor guanylyltransferase from Helicobacter pylori (strain J99 / ATCC 700824) (Campylobacter pylori J99).